The sequence spans 375 residues: Glutamate 5-kinase (375 aa).

An ATP-binding site is contributed by Lys-17. Residues Ser-57, Asp-144, and Asn-156 each coordinate substrate. 176–177 (TD) lines the ATP pocket. In terms of domain architecture, PUA spans 283-361 (KGRLWLDTGA…HQIEQILGYV (79 aa)).

The protein belongs to the glutamate 5-kinase family.

The protein resides in the cytoplasm. The catalysed reaction is L-glutamate + ATP = L-glutamyl 5-phosphate + ADP. It functions in the pathway amino-acid biosynthesis; L-proline biosynthesis; L-glutamate 5-semialdehyde from L-glutamate: step 1/2. Catalyzes the transfer of a phosphate group to glutamate to form L-glutamate 5-phosphate. The protein is Glutamate 5-kinase of Nitrosococcus oceani (strain ATCC 19707 / BCRC 17464 / JCM 30415 / NCIMB 11848 / C-107).